The chain runs to 451 residues: MRVSWISGLLLVAHLAPSSAFNPLRFFLDDTFSSGATEEHFMGPSDDGFALQQPTNYDPSMPFPLDESASAAVDAVSNNYIVMFKPSVDKSKLEQHHRWIEHLHEKRSLDFKDVSTFLMKHTFEIGDAFLGYAGRFSPWLVAELQKHPDIALVEPDRVMHVMTEQTFAPWGLARVSHRKKLGFFTMTRYQYNETAGEGVTAYVIDTGINIEHQDFQGRATWGATIPTGEGEVDDHGHGTHVAGTIAGKTFGVSKNAKLVAVKVMRADGTGTVSDIIKGIEFAFKQSKKDKESIASVVNMSIGGDASTALDLAVNAAIAGGLFFAVAAGNDAEDACGTSPARVSNAMTVGASTWNDQIASFSNIGSCVDIFAPGSLILSDWIGSNRASMILSGTSMASPHVAGLAAYFISLDPSLANHPVELKKYMLKFALKDLLNGIPEDTPNVLAFNNYE.

Positions 1–20 (MRVSWISGLLLVAHLAPSSA) are cleaved as a signal peptide. In terms of domain architecture, Inhibitor I9 spans 80-161 (YIVMFKPSVD…LVEPDRVMHV (82 aa)). The Peptidase S8 domain maps to 169-451 (PWGLARVSHR…PNVLAFNNYE (283 aa)). Residues aspartate 205, histidine 237, and serine 394 each act as charge relay system in the active site.

The protein belongs to the peptidase S8 family.

The polypeptide is Subtilase-type proteinase psp3 (psp3) (Schizosaccharomyces pombe (strain 972 / ATCC 24843) (Fission yeast)).